Consider the following 276-residue polypeptide: Diaminopimelate epimerase (276 aa).

N13, Q46, and N66 together coordinate substrate. The active-site Proton donor is the C75. Substrate contacts are provided by residues 76-77 (GN), N159, N192, and 210-211 (ER). C219 functions as the Proton acceptor in the catalytic mechanism. 220 to 221 (GT) contributes to the substrate binding site.

It belongs to the diaminopimelate epimerase family. In terms of assembly, homodimer.

The protein resides in the cytoplasm. It carries out the reaction (2S,6S)-2,6-diaminopimelate = meso-2,6-diaminopimelate. It participates in amino-acid biosynthesis; L-lysine biosynthesis via DAP pathway; DL-2,6-diaminopimelate from LL-2,6-diaminopimelate: step 1/1. Functionally, catalyzes the stereoinversion of LL-2,6-diaminopimelate (L,L-DAP) to meso-diaminopimelate (meso-DAP), a precursor of L-lysine and an essential component of the bacterial peptidoglycan. The polypeptide is Diaminopimelate epimerase (Pseudomonas aeruginosa (strain UCBPP-PA14)).